A 68-amino-acid chain; its full sequence is Large ribosomal subunit protein bL32 (68 aa).

The disordered stretch occupies residues 1–24 (MAVPQNRVTRSRRNMRRSHDALVA).

Belongs to the bacterial ribosomal protein bL32 family.

The chain is Large ribosomal subunit protein bL32 from Paracoccus denitrificans (strain Pd 1222).